A 427-amino-acid polypeptide reads, in one-letter code: Pectin acetylesterase 5 (427 aa).

The first 35 residues, Met-1–Ser-35, serve as a signal peptide directing secretion. Asn-173 carries an N-linked (GlcNAc...) asparagine glycan. Catalysis depends on charge relay system residues Ser-209, Asp-305, and His-372. Residue Asn-391 is glycosylated (N-linked (GlcNAc...) asparagine).

The protein belongs to the pectinacetylesterase family.

The protein resides in the secreted. It is found in the cell wall. Hydrolyzes acetyl esters in homogalacturonan regions of pectin. In type I primary cell wall, galacturonic acid residues of pectin can be acetylated at the O-2 and O-3 positions. Decreasing the degree of acetylation of pectin gels in vitro alters their physical properties. In Arabidopsis thaliana (Mouse-ear cress), this protein is Pectin acetylesterase 5.